Here is a 191-residue protein sequence, read N- to C-terminus: Protein GrpE (191 aa).

Belongs to the GrpE family. Homodimer.

It localises to the cytoplasm. Participates actively in the response to hyperosmotic and heat shock by preventing the aggregation of stress-denatured proteins, in association with DnaK and GrpE. It is the nucleotide exchange factor for DnaK and may function as a thermosensor. Unfolded proteins bind initially to DnaJ; upon interaction with the DnaJ-bound protein, DnaK hydrolyzes its bound ATP, resulting in the formation of a stable complex. GrpE releases ADP from DnaK; ATP binding to DnaK triggers the release of the substrate protein, thus completing the reaction cycle. Several rounds of ATP-dependent interactions between DnaJ, DnaK and GrpE are required for fully efficient folding. The sequence is that of Protein GrpE from Listeria monocytogenes serotype 4b (strain CLIP80459).